Consider the following 3148-residue polypeptide: Huntingtin (3148 aa).

HEAT repeat units follow at residues 149-186 (PYLVNLLPCLTRITKRQEETIQETLAAAMPKIMAALGH) and 191-228 (GEIKMLLKSFVANLKSSSPTIRRTAASSAVSVCQHSRR). Polar residues-rich tracts occupy residues 428–451 (QQPRSSQHTIQPGDSVDLSASSEQ), 475–486 (SRSSSCGANITP), and 516–526 (PSDSSQTTTEG). Disordered regions lie at residues 428–532 (QQPR…SAVT) and 557–622 (QDEE…NKMS). Basic and acidic residues predominate over residues 602-621 (SVDRFIPKDEPPEPEPDNKM). HEAT repeat units follow at residues 760–797 (LSLVDLVPLLQKALKDESSVTCKMACSAVRHCIMSLCG) and 861–898 (LQERVLNDVVIQLLGDDDPRVRHVAASAVSRLVSRLFF). 2 stretches are compositionally biased toward low complexity: residues 1025–1042 (TLSVSQSGSTPASSTTSS) and 1105–1115 (SSSSTNTSGGT). Disordered regions lie at residues 1025–1047 (TLSVSQSGSTPASSTTSSAVDPE), 1098–1117 (WAGEDDSSSSSTNTSGGTHK), and 1158–1215 (GPPV…GSTA). Over residues 1201–1215 (EANTGRPTESTGSTA) the composition is skewed to polar residues. One copy of the HEAT 5 repeat lies at 1419-1456 (LFEPLVIKALKQYTTSTSVALQRQVLDLLAQLVQLRVN). Over residues 1712–1730 (PNLSPSDQPAGDGQQNQEP) the composition is skewed to polar residues. Disordered regions lie at residues 1712-1735 (PNLSPSDQPAGDGQQNQEPNGEAQ) and 2072-2091 (VSDTSSPSTPVTSHPLDGDP). Residues 2072-2084 (VSDTSSPSTPVTS) are compositionally biased toward low complexity. The Nuclear export signal signature appears at 2398 to 2407 (IIISLSRLPL). Residues 2639–2649 (EWGEDEDDEAD) show a composition bias toward acidic residues. The interval 2639-2664 (EWGEDEDDEADPPAPTSPPLSPINSR) is disordered. Residues 2650 to 2659 (PPAPTSPPLS) are compositionally biased toward pro residues.

This sequence belongs to the huntingtin family.

Its subcellular location is the cytoplasm. The protein localises to the nucleus. May play a role in microtubule-mediated transport or vesicle function. This is Huntingtin (htt) from Takifugu rubripes (Japanese pufferfish).